Consider the following 228-residue polypeptide: Probable ribosomal RNA small subunit methyltransferase A (228 aa).

His9, Leu11, Gly34, Glu55, Asp78, and Asn93 together coordinate S-adenosyl-L-methionine.

This sequence belongs to the class I-like SAM-binding methyltransferase superfamily. rRNA adenine N(6)-methyltransferase family. RsmA subfamily.

The protein resides in the cytoplasm. Specifically dimethylates two adjacent adenosines in the loop of a conserved hairpin near the 3'-end of 16S rRNA in the 30S particle. May play a critical role in biogenesis of 30S subunits. The chain is Probable ribosomal RNA small subunit methyltransferase A from Pyrobaculum aerophilum (strain ATCC 51768 / DSM 7523 / JCM 9630 / CIP 104966 / NBRC 100827 / IM2).